The sequence spans 362 residues: MGKRLLILEDGTIFEGQAFGADLDVTGEIVFNTGMTGYQESITDQSYNGQILTFTYPLVGNYGINRDDYESIKPTCKGVVVSENARRANNWRKQMTLDEFLKSKNIPGISGIDTRALTKIIRHHGTMKATLANEGDSIEHLQDQLRATVLPTNNIEQVSTKTAYPAPGVGKNIVLVDFGLKHSILREFSKRNCNVTVVPYNTTAQEILNLNPDGIMLSNGPGNPQDVPEALEMIRGVQGKIPIFGICMGHQLFSLANGASTYKMKFGHRGFNHAVREIATGRIDFTSQNHGYAVSRDNLPEELIITHEEINDKSIEGVRHRYYPAFSVQYHPDAAPGPHDASYLFDEFLELIDAFQLEKASK.

A CPSase region spans residues 1 to 169 (MGKRLLILED…TKTAYPAPGV (169 aa)). The L-glutamine site is built by Ser46, Gly220, and Gly222. Positions 172 to 358 (NIVLVDFGLK…LELIDAFQLE (187 aa)) constitute a Glutamine amidotransferase type-1 domain. Cys247 functions as the Nucleophile in the catalytic mechanism. Residues Met248, Gln251, Asn289, Gly291, and Tyr292 each coordinate L-glutamine. Residues His331 and Asp333 contribute to the active site.

The protein belongs to the CarA family. Composed of two chains; the small (or glutamine) chain promotes the hydrolysis of glutamine to ammonia, which is used by the large (or ammonia) chain to synthesize carbamoyl phosphate. Tetramer of heterodimers (alpha,beta)4.

The enzyme catalyses hydrogencarbonate + L-glutamine + 2 ATP + H2O = carbamoyl phosphate + L-glutamate + 2 ADP + phosphate + 2 H(+). It carries out the reaction L-glutamine + H2O = L-glutamate + NH4(+). Its pathway is amino-acid biosynthesis; L-arginine biosynthesis; carbamoyl phosphate from bicarbonate: step 1/1. It functions in the pathway pyrimidine metabolism; UMP biosynthesis via de novo pathway; (S)-dihydroorotate from bicarbonate: step 1/3. Small subunit of the glutamine-dependent carbamoyl phosphate synthetase (CPSase). CPSase catalyzes the formation of carbamoyl phosphate from the ammonia moiety of glutamine, carbonate, and phosphate donated by ATP, constituting the first step of 2 biosynthetic pathways, one leading to arginine and/or urea and the other to pyrimidine nucleotides. The small subunit (glutamine amidotransferase) binds and cleaves glutamine to supply the large subunit with the substrate ammonia. This is Carbamoyl phosphate synthase small chain from Streptococcus mutans serotype c (strain ATCC 700610 / UA159).